Here is a 120-residue protein sequence, read N- to C-terminus: Putative monooxygenase GME11364 (120 aa).

In terms of domain architecture, ABM spans 9-99 (VSVHIRLTVD…ILLKPHEVEL (91 aa)).

Belongs to the LsrG family.

The protein operates within secondary metabolite biosynthesis. Putative monooxygenase; part of the gene cluster that mediates the biosynthesis of dibenzodioxocinones such as pestalotiollide B, a novel class of inhibitors against cholesterol ester transfer protein (CEPT). The biosynthesis initiates from condensation of acetate and malonate units catalyzed by the non-reducing PKS pks8/GME11356. Pks8/GME11356 lacks a thioesterase (TE) domain, which is important to the cyclizing of the third ring of atrochrysone carboxylic acid, and the esterase GME11355 might play the role of TE and catalyzes the cyclization reaction of the C ring. The lactamase-like protein GME11357 (or other beta-lactamases in Pestalotiopsis microspora) probably hydrolyzes the thioester bond between the ACP of pks8/GME11356 and the intermediate to release atrochrysone carboxylic acid, which is spontaneously dehydrates to form endocrocin anthrone. Endocrocin anthrone is further converted to emodin via the endocrocin intermediate. Emodin is then oxidized by several enzymes such as the Baeyer-Villiger oxidase GME11358, the oxidoreductase GME11367, the short chain dehydrogenase/reductase GME11373, as well as by other oxidoreductases from the cluster, to modify the A and C rings and open the B ring, and finally yield monodictyphenone. The prenyltransferase GME11375 may catalyze the addition reaction between the C5 side chains and the carbon bone of dibenzodioxocinones. The remaining biochemical reactions to the final product dibenzodioxocinones should be methylation catalyzed by methyltransferase GME11366 and reduction and lactonization reaction catalyzed by a series of oxidordeuctases. In Pestalotiopsis microspora, this protein is Putative monooxygenase GME11364.